A 622-amino-acid chain; its full sequence is Pyranose 2-oxidase (622 aa).

The N-terminal stretch at 1-28 (MSTSSSDPFYNFAKTSFKSAAAQKASAT) is a signal peptide. Positions 29-38 (SLPPLPGPDQ) are excised as a propeptide. A Tele-8alpha-FAD histidine modification is found at histidine 167. Glutamine 448 and histidine 450 together coordinate substrate. Histidine 548 functions as the Proton acceptor in the catalytic mechanism. The active site involves asparagine 593.

The protein belongs to the GMC oxidoreductase family. As to quaternary structure, homotetramer. FAD serves as cofactor.

The protein localises to the periplasm. It catalyses the reaction D-glucose + O2 = 2-dehydro-D-glucose + H2O2. In terms of biological role, catalyzes the oxidation of various aldopyranoses and disaccharides on carbon-2 to the corresponding 2-keto sugars concomitant with the reduction of O(2) to H(2)O(2). Plays an important role in lignin degradation of wood rot fungi by supplying the essential cosubstrate H(2)O(2) for the ligninolytic peroxidases, lignin peroxidase and manganese-dependent peroxidase. The polypeptide is Pyranose 2-oxidase (p2ox) (Trametes pubescens (White-rot fungus)).